Reading from the N-terminus, the 405-residue chain is Corticosteroid-binding globulin (405 aa).

An N-terminal signal peptide occupies residues 1 to 22; it reads MPLLLYTCLLWLSTSGLWTVQA. N-linked (GlcNAc...) asparagine glycosylation is found at Asn-26, Asn-31, Asn-96, and Asn-260. Asn-286 contacts cortisol. N-linked (GlcNAc...) asparagine glycosylation is found at Asn-330 and Asn-369. A cortisol-binding site is contributed by Trp-393.

It belongs to the serpin family. In terms of tissue distribution, expressed by the liver; secreted in plasma.

The protein resides in the secreted. In terms of biological role, major transport protein for glucocorticoids and progestins in the blood of almost all vertebrate species. The polypeptide is Corticosteroid-binding globulin (SERPINA6) (Pongo abelii (Sumatran orangutan)).